The chain runs to 491 residues: Large ribosomal subunit protein mL101 (rPPR4) (491 aa).

8 PPR repeats span residues 122–156 (TELT…NITP), 157–191 (SSMS…NVMP), 192–226 (DSYT…GRVA), 228–262 (DWTT…NTQR), 263–293 (DFTA…LRLA), 298–328 (SNVA…WQAN), 333–367 (DIRI…GGKL), and 368–402 (NAKT…GKGD).

Belongs to the PPR family. P subfamily. In terms of assembly, component of the mitochondrial ribosome large subunit.

The protein localises to the mitochondrion. The chain is Large ribosomal subunit protein mL101 (rPPR4) from Arabidopsis thaliana (Mouse-ear cress).